A 362-amino-acid polypeptide reads, in one-letter code: Serpentine receptor class epsilon-37 (362 aa).

Helical transmembrane passes span 29–49 (IFYV…YILV), 67–87 (IMMC…IVLI), 127–147 (IYFA…AVLA), 170–190 (IPIL…YQTT), 204–224 (IFIG…NLAW), 260–280 (LVVS…VLLF), and 288–308 (FFVH…SLTL).

The protein belongs to the nematode receptor-like protein sre family.

The protein resides in the membrane. The sequence is that of Serpentine receptor class epsilon-37 (sre-37) from Caenorhabditis elegans.